We begin with the raw amino-acid sequence, 180 residues long: ATP-dependent protease subunit HslV (180 aa).

Thr8 is an active-site residue. Residues Ala165, Cys168, and Thr171 each contribute to the Na(+) site.

This sequence belongs to the peptidase T1B family. HslV subfamily. A double ring-shaped homohexamer of HslV is capped on each side by a ring-shaped HslU homohexamer. The assembly of the HslU/HslV complex is dependent on binding of ATP.

It localises to the cytoplasm. The catalysed reaction is ATP-dependent cleavage of peptide bonds with broad specificity.. Allosterically activated by HslU binding. Its function is as follows. Protease subunit of a proteasome-like degradation complex believed to be a general protein degrading machinery. The sequence is that of ATP-dependent protease subunit HslV from Macrococcus caseolyticus (strain JCSC5402) (Macrococcoides caseolyticum).